A 260-amino-acid chain; its full sequence is Proteasome subunit alpha (260 aa).

Belongs to the peptidase T1A family. As to quaternary structure, the 20S proteasome core is composed of 14 alpha and 14 beta subunits that assemble into four stacked heptameric rings, resulting in a barrel-shaped structure. The two inner rings, each composed of seven catalytic beta subunits, are sandwiched by two outer rings, each composed of seven alpha subunits. The catalytic chamber with the active sites is on the inside of the barrel. Has a gated structure, the ends of the cylinder being occluded by the N-termini of the alpha-subunits. Is capped at one or both ends by the proteasome regulatory ATPase, PAN.

It localises to the cytoplasm. Its activity is regulated as follows. The formation of the proteasomal ATPase PAN-20S proteasome complex, via the docking of the C-termini of PAN into the intersubunit pockets in the alpha-rings, triggers opening of the gate for substrate entry. Interconversion between the open-gate and close-gate conformations leads to a dynamic regulation of the 20S proteasome proteolysis activity. Component of the proteasome core, a large protease complex with broad specificity involved in protein degradation. The polypeptide is Proteasome subunit alpha (Thermococcus onnurineus (strain NA1)).